Here is a 357-residue protein sequence, read N- to C-terminus: uncharacterized protein (357 aa).

Residues 120 to 145 (SSSTVNHDQPAEQPSDKSTDDSTGYP) are disordered.

This is an uncharacterized protein from Caenorhabditis elegans.